The sequence spans 56 residues: MRTEVVVFTLHESGKSFIEIARELNLQAKEVAVLWAREKVVYRKRHINKKVKNGTV.

This is an uncharacterized protein from Escherichia coli (Bacteriophage T4).